The primary structure comprises 729 residues: U-box domain-containing protein 17 (729 aa).

The 75-residue stretch at 304 to 378 (TVPKDFVCPI…VQWCTASGIS (75 aa)) folds into the U-box domain. ARM repeat units lie at residues 438–477 (KENR…NLSI), 479–520 (EKNK…SLSA), 523–562 (EYKK…NLST), and 564–601 (PDNC…LLVR).

The catalysed reaction is S-ubiquitinyl-[E2 ubiquitin-conjugating enzyme]-L-cysteine + [acceptor protein]-L-lysine = [E2 ubiquitin-conjugating enzyme]-L-cysteine + N(6)-ubiquitinyl-[acceptor protein]-L-lysine.. It functions in the pathway protein modification; protein ubiquitination. Functions as an E3 ubiquitin ligase. The polypeptide is U-box domain-containing protein 17 (PUB17) (Arabidopsis thaliana (Mouse-ear cress)).